The chain runs to 687 residues: Tripartite terminase subunit 3 (687 aa).

Positions His-67–Ala-91 are disordered. A Walker A motif motif is present at residues Ile-221 to Thr-228. The Walker B motif motif lies at Leu-316–Glu-321. Glu-321 functions as the For ATPase activity in the catalytic mechanism. Active-site for nuclease activity residues include Asp-476, Glu-550, and Asp-662.

It belongs to the herpesviridae TRM3 protein family. Interacts with the terminase subunits TRM1 and TRM2. Interacts with portal protein.

Its subcellular location is the host nucleus. Its function is as follows. Component of the molecular motor that translocates viral genomic DNA in empty capsid during DNA packaging. Forms a tripartite terminase complex together with TRM1 and TRM2 in the host cytoplasm. Once the complex reaches the host nucleus, it interacts with the capsid portal vertex. This portal forms a ring in which genomic DNA is translocated into the capsid. TRM3 carries an RNase H-like nuclease activity that plays an important role for the cleavage of concatemeric viral DNA into unit length genomes. This is Tripartite terminase subunit 3 from Human herpesvirus 8 type P (isolate GK18) (HHV-8).